Reading from the N-terminus, the 31-residue chain is Putative gene 37 protein (31 aa).

This Bacillus subtilis (Bacteriophage SP01) protein is Putative gene 37 protein (37).